We begin with the raw amino-acid sequence, 312 residues long: tRNA-dihydrouridine(16) synthase (312 aa).

FMN is bound by residues 7–9 and Gln-68; that span reads PME. The Proton donor role is filled by Cys-98. FMN-binding positions include Lys-139, 200 to 202, and 224 to 225; these read NGE and GR.

The protein belongs to the Dus family. DusC subfamily. FMN is required as a cofactor.

The enzyme catalyses 5,6-dihydrouridine(16) in tRNA + NADP(+) = uridine(16) in tRNA + NADPH + H(+). The catalysed reaction is 5,6-dihydrouridine(16) in tRNA + NAD(+) = uridine(16) in tRNA + NADH + H(+). Its function is as follows. Catalyzes the synthesis of 5,6-dihydrouridine (D), a modified base found in the D-loop of most tRNAs, via the reduction of the C5-C6 double bond in target uridines. Specifically modifies U16 in tRNAs. The chain is tRNA-dihydrouridine(16) synthase from Salmonella typhimurium (strain LT2 / SGSC1412 / ATCC 700720).